We begin with the raw amino-acid sequence, 215 residues long: Endonuclease III (215 aa).

The HhH domain maps to 113 to 132 (REDLESLPGVGRKTANVILN). [4Fe-4S] cluster is bound by residues C192, C199, C202, and C208.

It belongs to the Nth/MutY family. Requires [4Fe-4S] cluster as cofactor.

It catalyses the reaction 2'-deoxyribonucleotide-(2'-deoxyribose 5'-phosphate)-2'-deoxyribonucleotide-DNA = a 3'-end 2'-deoxyribonucleotide-(2,3-dehydro-2,3-deoxyribose 5'-phosphate)-DNA + a 5'-end 5'-phospho-2'-deoxyribonucleoside-DNA + H(+). Functionally, DNA repair enzyme that has both DNA N-glycosylase activity and AP-lyase activity. The DNA N-glycosylase activity releases various damaged pyrimidines from DNA by cleaving the N-glycosidic bond, leaving an AP (apurinic/apyrimidinic) site. The AP-lyase activity cleaves the phosphodiester bond 3' to the AP site by a beta-elimination, leaving a 3'-terminal unsaturated sugar and a product with a terminal 5'-phosphate. In Buchnera aphidicola subsp. Baizongia pistaciae (strain Bp), this protein is Endonuclease III.